The chain runs to 257 residues: Undecaprenyl-diphosphatase (257 aa).

Transmembrane regions (helical) follow at residues 4–24, 41–61, 74–94, 103–123, 133–153, 173–193, 209–229, and 236–256; these read LIRVVILAIVQGIAEFLPISS, SVTLEIILHAGTLGSILVVFW, VIGLLVIGTLPAVVIGLTIKT, PLLAGAMLIVTGVMLIVLGRL, LGLGAAFLVGCFQAFAILPGI, SVTFSFLLAIPAILGATVLAI, VLSIGAAVAFAVGIVALKWLI, and RLHWFAYWCIPAGLLVVLLNL.

Belongs to the UppP family.

It is found in the cell inner membrane. The catalysed reaction is di-trans,octa-cis-undecaprenyl diphosphate + H2O = di-trans,octa-cis-undecaprenyl phosphate + phosphate + H(+). Its function is as follows. Catalyzes the dephosphorylation of undecaprenyl diphosphate (UPP). Confers resistance to bacitracin. In Rhodopirellula baltica (strain DSM 10527 / NCIMB 13988 / SH1), this protein is Undecaprenyl-diphosphatase.